Consider the following 228-residue polypeptide: ATP-dependent dethiobiotin synthetase BioD (228 aa).

12 to 17 (DVGKTY) is an ATP binding site. Threonine 16 provides a ligand contact to Mg(2+). Residue lysine 37 is part of the active site. Residues aspartate 53, 114–117 (EGMG), 174–175 (ND), 203–205 (PFI), and asparagine 210 contribute to the ATP site. Mg(2+)-binding residues include aspartate 53 and glutamate 114.

The protein belongs to the dethiobiotin synthetase family. In terms of assembly, homodimer. Mg(2+) serves as cofactor.

The protein resides in the cytoplasm. It carries out the reaction (7R,8S)-7,8-diammoniononanoate + CO2 + ATP = (4R,5S)-dethiobiotin + ADP + phosphate + 3 H(+). It participates in cofactor biosynthesis; biotin biosynthesis; biotin from 7,8-diaminononanoate: step 1/2. In terms of biological role, catalyzes a mechanistically unusual reaction, the ATP-dependent insertion of CO2 between the N7 and N8 nitrogen atoms of 7,8-diaminopelargonic acid (DAPA, also called 7,8-diammoniononanoate) to form a ureido ring. The polypeptide is ATP-dependent dethiobiotin synthetase BioD (Nitrosopumilus maritimus (strain SCM1)).